A 1866-amino-acid chain; its full sequence is MDDILSAALAESGLDFLCQQSSPTPSTSGSIHDDAGQSFSNNTHTPSVSQFFDETSNDSHSSSAYYTPMATPFVSTEDGGVPTSFFGMDEEDGGCTIMTTAGTSGSNNIDGIEDAGGGMYYPHVKVIPRKHTAPTVNQSEPSTPTVTIVPKKEDPLFETNTADSPTPSGDTSTTASYEGNDGLEDQETTSDRQNPMFVQTARSTDGRLDTPSTSATVSPHITSSLTQRSHTSSPASSASEGTVVPPRKKGLPITTGSIVKRTVQTKDGLQTQYLKAFVNENGEKIYKLLSPVAASAVARGTLPPGMGRGGSTIGRGGTMVNKNGERLMVVKNHVGPNGQMLVKRMVSPAGTRIVANGGQGRGQPIYRAVDGSNGPTHLLRRTTTTGQPTRGAPVGMAARHAVRGGTVYGGGNGYRVNLVGRGTGGSTMVHHQPLNRISSQRSVAPVGRVLNRGALRNGAQQPLHVSTSSPAFHYMEEQPSPTTNGMVIQAKTPGAGVIQARHMQSQQSFPSGGPARVLMNRSSTNAGLSRMVGGGYDQQLPTAPNGRLMIPSTAVRVPGSGMASPRLQTTPQPLTKSQKAKDEMKMAYQVGREEALQQRRNDLEDDEENLGYAETYSEYTPAKLRSGMAHPDSVVESASLSSVSPPDVKYQISIPEYLIDMGHISALQLEAVIYACQMHERRMPSGERYGYLIGDGAGVGKGRTVACIIFENYLQGRKRAIWLSVSSDLKFDAERDLRDCGAPNIPVYALNKMKYAKISGKENGSIKKGVMFATYTSLIGECRGAKSRKYRSRISQLIQWFGQDYDGVIILDECHRAKNLVPTAGAKPTKTGRMVLELQKALPNARVVYASATGATEPRNMAYMTRLGLWGERQAFPEFHDFISAVERRGVGAMEIVAMDMKQRGLYLARQLSFRGVSFAVQEVQLSSEFVKMYDAAVKLWMEARRQFQTVIETMDEEERSTCKTVWGQFWACHQRFFKYLCIAAKVDTCVQLSREAIKAKKCVVIGLQSTGESATLETLEEMGGELNEFVSTAKTVLYGLIDKHFPTDASFSMGDRDIFKDFDDFERPAKRRKTRETLSFLGDVGFDTWTGVTTGMGGRVGDGVTKNITRGLSGIGRSSMSSSTGNTNNEDANSTTSESSDGSDDEVENDMISENGGESGDLESAREEAEGARTLEDGEQDEWVKALLAEAESSSDDSDEEVVKDEDEDEEAESKSGETHEQEEEFNPFMCDFTNDDPWAHNQQIVEDTPQKDRKAKKRKRDEEEAERLREKVRKREERREKKRRRAIRRAEREKQRRNEELQARGSATDFITSSRICGNGSGEQDDINPMLIKTELLAAVERLAPSLPANTLDQLIDEMGGPEYVAEMTGRRGHMVTSETGDVMYQRRNANAEVSLELINMEEKEKFMRGEKLIAIISEAASSGISLQSDRRAINKRRRVHITLELPWSADKAIQQFGRTHRSNQVSGPEYVFLISELAGEKRFASIVAKRLESLGALTHGDRRATETRDLSQFNMDNKYGRVALDTLLKTVIGQAGTPLIDPPKDYKAGEFFEDMRLYMEGVGLLAKNKTGQYTIEKEAATIPKFLNRILGLPVHAQNSLFHYFSEIVAELIAQSKHDGTYDTGIMDLGTGDDQVRKLETRVFTGRVDNGSFRVEIHKIGVERGVSWEEAMELHKEHSNDDDGFYICHPGGANTANTKKVAALVYGIGKIRMDNGARLYAITRPSTGRSPKLMTMADLSKRFHKVSIDEAKEVWKQQYDSAANMCQHNYVYGKCRTESNGTYCEVGRRTRTYFVLSGSVLSVWPIVEEVLAGSDRKSSRMQVIRVRTEQDQKIVGLLVLPTHVRHLVQQLETHCGRSYVKTEP.

The segment covering 19–28 (QQSSPTPSTS) has biased composition (low complexity). Disordered regions lie at residues 19-63 (QQSS…HSSS), 132-151 (TAPT…IVPK), 156-253 (LFET…GLPI), 561-581 (GMAS…QKAK), and 1112-1308 (GLSG…ARGS). Polar residues-rich tracts occupy residues 37–63 (QSFS…HSSS) and 134–146 (PTVN…TPTV). Over residues 161–176 (TADSPTPSGDTSTTAS) the composition is skewed to low complexity. Polar residues-rich tracts occupy residues 191–203 (DRQN…TARS) and 210–228 (TPST…LTQR). Residues 229-239 (SHTSSPASSAS) show a composition bias toward low complexity. The span at 566-577 (RLQTTPQPLTKS) shows a compositional bias: polar residues. Residues 1112 to 1126 (GLSGIGRSSMSSSTG) show a composition bias toward low complexity. The span at 1142-1152 (DGSDDEVENDM) shows a compositional bias: acidic residues. Positions 1164 to 1177 (ESAREEAEGARTLE) are enriched in basic and acidic residues. A compositionally biased stretch (acidic residues) spans 1194–1213 (SSSDDSDEEVVKDEDEDEEA). Basic and acidic residues-rich tracts occupy residues 1262 to 1281 (RDEE…EERR) and 1290 to 1304 (RRAE…EELQ).

The protein belongs to the SBNO family. In terms of tissue distribution, expressed in the somatic gonad, neurons, hypodermal cells, seam cells, the excretory system, and intestinal cells (at protein level).

Its subcellular location is the nucleus. In terms of biological role, transcriptional activator that functions upstream of the let-60/Ras and let-23/EGFR signaling pathways to positively regulate lin-3 expression and thereby promote vulval induction. Plays a role in excretory duct development. Plays a role in male tail development. The chain is Protein strawberry notch homolog from Caenorhabditis elegans.